We begin with the raw amino-acid sequence, 359 residues long: Peptide chain release factor 1 (359 aa).

Q235 carries the N5-methylglutamine modification.

Belongs to the prokaryotic/mitochondrial release factor family. Post-translationally, methylated by PrmC. Methylation increases the termination efficiency of RF1.

It localises to the cytoplasm. Peptide chain release factor 1 directs the termination of translation in response to the peptide chain termination codons UAG and UAA. This chain is Peptide chain release factor 1, found in Polynucleobacter asymbioticus (strain DSM 18221 / CIP 109841 / QLW-P1DMWA-1) (Polynucleobacter necessarius subsp. asymbioticus).